Here is a 21-residue protein sequence, read N- to C-terminus: Serine protease inhibitor 1 (21 aa).

The region spanning 1 to 21 is the Pacifastin domain; it reads EQQCTPGQTKKEDCNNCTSGD. The interval 1 to 21 is disordered; sequence EQQCTPGQTKKEDCNNCTSGD.

This sequence belongs to the protease inhibitor I19 family. In terms of tissue distribution, expressed in hemolymph.

It is found in the secreted. Its function is as follows. Probable serine protease inhibitor. This is Serine protease inhibitor 1 from Melanoplus sanguinipes (Migratory grasshopper).